Consider the following 257-residue polypeptide: Uracil phosphoribosyltransferase homolog (257 aa).

GTP is bound by residues arginine 81, arginine 90, and 124–127 (EKGN). 5-phospho-alpha-D-ribose 1-diphosphate is bound at residue arginine 134. 2 residues coordinate GTP: arginine 151 and arginine 180. Residue 186 to 194 (YPILSTGNT) coordinates 5-phospho-alpha-D-ribose 1-diphosphate. Residue 247 to 249 (THF) participates in uracil binding.

It belongs to the UPRTase family.

The protein localises to the cytoplasm. It is found in the nucleus. In Danio rerio (Zebrafish), this protein is Uracil phosphoribosyltransferase homolog (uprt).